The chain runs to 2027 residues: Dedicator of cytokinesis protein 3 (2027 aa).

An SH3 domain is found at 6 to 67 (EEEKYGVVIC…PANYIHLKKA (62 aa)). A C2 DOCK-type domain is found at 421–598 (RNDLYLTLEK…ESFFISTQLS (178 aa)). Residues 1225–1632 (KSEINKEEMY…LYHEFPGLDK (408 aa)) form the DOCKER domain. Ser-1655 bears the Phosphoserine mark. 4 disordered regions span residues 1672–1695 (GTGRHSSSSLSSHASSEAGNMMMM), 1731–1768 (SSSQASPSSSSLSSTHSAPSQMITSAPSSTRGSPSLPD), 1846–1925 (DTPP…DEGL), and 1971–2027 (PPKP…RGEQ). Low complexity-rich tracts occupy residues 1676 to 1695 (HSSSSLSSHASSEAGNMMMM) and 1731 to 1751 (SSSQASPSSSSLSSTHSAPSQ). Over residues 1752–1763 (MITSAPSSTRGS) the composition is skewed to polar residues. Over residues 1877-1899 (GSNSTLSGSASSGVSSLSESNFG) the composition is skewed to low complexity. Positions 1967–1973 (PPALPPK) match the SH3-binding motif. 2 stretches are compositionally biased toward basic and acidic residues: residues 1981–1998 (ALEHDEGMLLREEAERPR) and 2011–2027 (VKEEQARLAWEHGRGEQ).

Belongs to the DOCK family. Interacts with presenilin proteins PSEN1 and PSEN2. Interacts with CRK. As to expression, expressed in brain, spinal cord, pituitary gland, testis. Not expressed in heart, liver, kidney, spleen and lung. In brain, it is highly expressed in the cerebral cortex and hippocampus, while it is absent in other tissues, except in spinal cord. In the cerebral cortex, it is found within the intermediate (III and IV) and deep (V and VI) layers, whereas it is weakly expressed in superficial layer I. It is also abundant in the piriform cortex. Within the hippocampus, it is expressed in the pyramidal neurons of the CA1, CA2, and CA3 regions and the dentate gyrus.

The protein resides in the cytoplasm. In terms of biological role, potential guanine nucleotide exchange factor (GEF). GEF proteins activate some small GTPases by exchanging bound GDP for free GTP. Its interaction with presenilin proteins as well as its ability to stimulate Tau/MAPT phosphorylation suggest that it may be involved in Alzheimer disease. Ectopic expression in nerve cells decreases the secretion of amyloid-beta APBA1 protein and lowers the rate of cell-substratum adhesion, suggesting that it may affect the function of some small GTPase involved in the regulation of actin cytoskeleton or cell adhesion receptors. In Mus musculus (Mouse), this protein is Dedicator of cytokinesis protein 3 (Dock3).